Reading from the N-terminus, the 92-residue chain is Small ribosomal subunit protein uS19 (92 aa).

This sequence belongs to the universal ribosomal protein uS19 family.

Its function is as follows. Protein S19 forms a complex with S13 that binds strongly to the 16S ribosomal RNA. The polypeptide is Small ribosomal subunit protein uS19 (rpsS) (Rickettsia prowazekii (strain Madrid E)).